A 543-amino-acid chain; its full sequence is Sarafotoxin (543 aa).

The signal sequence occupies residues 1–23 (MALLPRLAAGGLLLLLALAALEG). The propeptide occupies 24-69 (KPAPSALSQLLEKRSEDQAAAGRIIDGGDTKQAARDPSPQRNVEPL). The segment at 45–65 (GRIIDGGDTKQAARDPSPQRN) is disordered. 12 repeat units span residues 51-90 (GDTK…DVIW), 91-130 (RDTK…DVIW), 131-170 (RDTK…DVIW), 171-210 (RDTK…DVIW), 211-250 (RDTK…DVIW), 251-290 (RDTK…GIIW), 291-330 (RDTK…DVIW), 331-370 (RDTK…DVIW), 371-410 (RDTK…DVIW), 411-450 (RDTK…DVIW), 451-490 (RDTK…DVIW), and 491-530 (RDTK…DVIW). The 12 X 40 AA tandem repeats stretch occupies residues 51 to 530 (GDTKQAARDP…LNFCHQDVIW (480 aa)). Cystine bridges form between Cys70-Cys84 and Cys72-Cys80. Residues 92–109 (DTKQAARDPSPQRNVEPL) constitute a propeptide that is removed on maturation. Intrachain disulfides connect Cys110–Cys124 and Cys112–Cys120. Positions 132-149 (DTKQAARDPSPQRNVEPL) are excised as a propeptide. 2 disulfides stabilise this stretch: Cys150–Cys164 and Cys152–Cys160. Residues 172–189 (DTKQAARDPSPQRNVEPL) constitute a propeptide that is removed on maturation. Cystine bridges form between Cys190-Cys204 and Cys192-Cys200. Residues 212–229 (DTKQAARDPSPQRNVEPL) constitute a propeptide that is removed on maturation. 2 cysteine pairs are disulfide-bonded: Cys230/Cys244 and Cys232/Cys240. Residues 252 to 269 (DTKQAARDPSPQRNVEPL) constitute a propeptide that is removed on maturation. Cystine bridges form between Cys270/Cys284 and Cys272/Cys280. Positions 292–309 (DTKQAARDPSPQRNVEPL) are excised as a propeptide. 2 disulfide bridges follow: Cys310–Cys324 and Cys312–Cys320. The propeptide occupies 332 to 349 (DTKQAARDPSPQRNVEPL). 2 cysteine pairs are disulfide-bonded: Cys350/Cys364 and Cys352/Cys360. A propeptide spanning residues 372–389 (DTKQAARDPSPQRNVEPL) is cleaved from the precursor. 2 disulfide bridges follow: Cys390–Cys404 and Cys392–Cys400. Residues 412 to 429 (DTKQAARDPSPQRNVEPL) constitute a propeptide that is removed on maturation. Intrachain disulfides connect Cys430/Cys444 and Cys432/Cys440. The propeptide occupies 452 to 469 (DTKQAARDPSPQRNVEPL). Cystine bridges form between Cys470–Cys484 and Cys472–Cys480. A propeptide spanning residues 492 to 509 (DTKQAARDPSPQRNVEPL) is cleaved from the precursor. 2 disulfides stabilise this stretch: Cys510/Cys524 and Cys512/Cys520. Residues 532–543 (NADTSANPEFLG) constitute a propeptide that is removed on maturation.

The protein belongs to the endothelin/sarafotoxin family. As to expression, expressed by the venom gland.

The protein resides in the secreted. Vasoconstrictor activity. These toxins cause cardiac arrest probably as a result of coronary vasospasm. Functionally, vasoconstrictor activity. Causes cardiac arrest probably as a result of coronary vasospasm. Displays high agonistic activities towards endothelin-2 receptor (EDNRB) (displays affinity in the picomolar range) and endothelin-1 receptor (EDNRA) (lower affinities). The sequence is that of Sarafotoxin from Atractaspis engaddensis (Israeli burrowing asp).